The chain runs to 289 residues: uncharacterized protein (289 aa).

9 helical membrane-spanning segments follow: residues 13–32, 37–59, 80–99, 104–121, 141–160, 165–183, 203–225, 235–252, and 265–287; these read INFA…LSGS, LIIS…HLND, IVTE…IFFI, EIAL…WLYS, VFTY…TIFS, VGVV…GFFL, VLSP…FVVI, TSSL…FAIY, and IISS…AIGC.

Its subcellular location is the cell membrane. This is an uncharacterized protein from Archaeoglobus fulgidus (strain ATCC 49558 / DSM 4304 / JCM 9628 / NBRC 100126 / VC-16).